A 161-amino-acid chain; its full sequence is Phosphopantetheine adenylyltransferase (161 aa).

Substrate is bound at residue serine 11. Residues 11 to 12 and histidine 19 contribute to the ATP site; that span reads SF. Substrate contacts are provided by lysine 43, leucine 75, and arginine 89. ATP contacts are provided by residues 90–92, glutamate 100, and 125–131; these read GLR and YSFISSS.

This sequence belongs to the bacterial CoaD family. Homohexamer. Mg(2+) is required as a cofactor.

Its subcellular location is the cytoplasm. The catalysed reaction is (R)-4'-phosphopantetheine + ATP + H(+) = 3'-dephospho-CoA + diphosphate. The protein operates within cofactor biosynthesis; coenzyme A biosynthesis; CoA from (R)-pantothenate: step 4/5. Reversibly transfers an adenylyl group from ATP to 4'-phosphopantetheine, yielding dephospho-CoA (dPCoA) and pyrophosphate. The chain is Phosphopantetheine adenylyltransferase from Staphylococcus haemolyticus (strain JCSC1435).